Consider the following 358-residue polypeptide: Peptide chain release factor 1 (358 aa).

N5-methylglutamine is present on Gln233.

It belongs to the prokaryotic/mitochondrial release factor family. Methylated by PrmC. Methylation increases the termination efficiency of RF1.

The protein localises to the cytoplasm. In terms of biological role, peptide chain release factor 1 directs the termination of translation in response to the peptide chain termination codons UAG and UAA. The protein is Peptide chain release factor 1 of Blochmanniella floridana.